Here is a 229-residue protein sequence, read N- to C-terminus: Synaptogyrin-3 (229 aa).

Met-1 is subject to N-acetylmethionine. The MARVEL domain occupies 20–172; it reads FARRPQTLLR…LTVKALQRFR (153 aa). Helical transmembrane passes span 30-50, 70-90, 105-125, and 148-168; these read VASWVFSIAVFGPIVNEGYVN, FGVALGLGAFLACSCFLLLDV, VLLDLGFSGLWSFLWFVGFCF, and AVITFSFFSILSWVALTVKAL.

This sequence belongs to the synaptogyrin family. As to quaternary structure, interacts (via N-terminus) with SLC6A3 (via N-terminus). May interact with VMAT2.

The protein localises to the cytoplasmic vesicle. Its subcellular location is the secretory vesicle. It is found in the synaptic vesicle membrane. The protein resides in the synapse. May play a role in regulated exocytosis. May indirectly regulate the activity of the plasma membrane dopamine transporter SLC6A3 and thereby regulate dopamine transport back from the synaptic cleft into the presynaptic terminal. In Bos taurus (Bovine), this protein is Synaptogyrin-3.